The primary structure comprises 255 residues: Cobalt-precorrin-6A reductase (255 aa).

This sequence belongs to the precorrin-6x reductase family.

It catalyses the reaction Co-precorrin-6B + NAD(+) = Co-precorrin-6A + NADH + H(+). Its pathway is cofactor biosynthesis; adenosylcobalamin biosynthesis; cob(II)yrinate a,c-diamide from sirohydrochlorin (anaerobic route): step 7/10. In terms of biological role, catalyzes the reduction of the macrocycle of cobalt-precorrin-6A to cobalt-precorrin-6B. In Priestia megaterium (Bacillus megaterium), this protein is Cobalt-precorrin-6A reductase (cbiJ).